Here is a 78-residue protein sequence, read N- to C-terminus: FXYD domain-containing ion transport regulator 7 (78 aa).

The Extracellular segment spans residues Met-1–Thr-22. 2 O-linked (GlcNAc) threonine glycosylation sites follow: Thr-3 and Thr-7. The helical transmembrane segment at Val-23–Leu-43 threads the bilayer. At Ser-44–Val-78 the chain is on the cytoplasmic side. Residues Ala-52–Val-78 are disordered. Residue Ser-71 is modified to Phosphoserine.

This sequence belongs to the FXYD family. As to quaternary structure, regulatory subunit of the sodium/potassium-transporting ATPase which is composed of a catalytic alpha subunit, a non-catalytic beta subunit and an additional regulatory subunit. The regulatory subunit, a member of the FXYD protein family, modulates the enzymatic activity in a tissue- and isoform-specific way by changing affinities of the Na+/K+-ATPase toward Na(+), K(+) or ATP. Post-translationally, O-glycosylated; required for stabilization and translocation to the plasma membrane.

The protein localises to the cell membrane. In terms of biological role, associates with and regulates the activity of the sodium/potassium-transporting ATPase (NKA) which catalyzes the hydrolysis of ATP coupled with the exchange of Na(+) and K(+) ions across the plasma membrane. Reduces the apparent affinity for external K(+), an effect that depends on the presence of external Na(+) and voltage. Increases the apparent affinity for intracellular Na(+). The protein is FXYD domain-containing ion transport regulator 7 (FXYD7) of Bos taurus (Bovine).